Consider the following 482-residue polypeptide: 2-succinylbenzoate--CoA ligase (482 aa).

Belongs to the ATP-dependent AMP-binding enzyme family. MenE subfamily.

It catalyses the reaction 2-succinylbenzoate + ATP + CoA = 2-succinylbenzoyl-CoA + AMP + diphosphate. The protein operates within quinol/quinone metabolism; 1,4-dihydroxy-2-naphthoate biosynthesis; 1,4-dihydroxy-2-naphthoate from chorismate: step 5/7. Its pathway is quinol/quinone metabolism; menaquinone biosynthesis. Functionally, converts 2-succinylbenzoate (OSB) to 2-succinylbenzoyl-CoA (OSB-CoA). This is 2-succinylbenzoate--CoA ligase from Bacillus thuringiensis subsp. konkukian (strain 97-27).